A 783-amino-acid polypeptide reads, in one-letter code: MITTRLARMGALAPKSRLLFGTRGMATVADLDKKVEMCNLEKGNYINYKKMSENLDVVRRRLTRPLTYAEKILYSHLDDPQNQDIERGKSYLKLRPDRVACQDATAQMAILQFMSAGMPSVATPTTVHCDHLIEAQLGGEKDLARANEINKEVYDFLASSTAKYNIGFWKPGSGIIHQIILENYAFPGGLMIGTDSHTPNAGGLAIAAIGVGGADAVDVMAGLPWELKAPKVIGVRLTGEMSGWTAPKDIILKVAGLLTVKGGTGAIIEYHGPGVNSLSATGMATICNMGAEIGATTSLFPFNDRMYDYLKATKRQQIGDFARSYAKDLREDEGAEYDQLIEINLSELEPHINGPFTPDLATPISQFKEAVKANGWPEELKVGLIGSCTNSSYEDMSRAASIAQDALDHGLKAKSIFTVTPGSEQIRATIERDGQLKTLEEFGGVILANACGPCIGQWDRKDVKKGTPNSIVSSYNRNFTGRNDANPATHAFVTSPDLVVALSIAGTLNFNPLTDTLKDKDGKEFKLKAPTGDGLPSRGYDPGRDTYQAPPTDRSSVDVAVSPSSDRLQLLAGFQPWDGKDATGIPILIKCQGKTTTDHISMAGPWLKYRGHLDNISNNMLIGAVNAENGEANKIKNVFTGEYGAVPATARDYKARGVKWVVIGDWNYGEGSSREHAALEPRHLGGLAIITRSFARIHETNLKKQGMLPLTFSDPADYDRIPPDATVDLLCTELAVDKPMTLRVHPKDGASFDVKLSHTFNESQIEWFKDGSALNTMARKSGN.

A mitochondrion-targeting transit peptide spans 1 to 25 (MITTRLARMGALAPKSRLLFGTRGM). Residues Gln102 and 195 to 197 (DSH) each bind substrate. Residues Cys388, Cys451, and Cys454 each coordinate [4Fe-4S] cluster. 2 residues coordinate substrate: Arg477 and Arg482. The interval 524–555 (EFKLKAPTGDGLPSRGYDPGRDTYQAPPTDRS) is disordered. Substrate contacts are provided by residues Arg610 and 673 to 674 (SR).

It belongs to the aconitase/IPM isomerase family. [4Fe-4S] cluster serves as cofactor.

The protein localises to the mitochondrion. The catalysed reaction is citrate = D-threo-isocitrate. It carries out the reaction (2R)-homocitrate = cis-homoaconitate + H2O. Its pathway is carbohydrate metabolism; tricarboxylic acid cycle; isocitrate from oxaloacetate: step 2/2. The protein operates within amino-acid biosynthesis; L-lysine biosynthesis via AAA pathway; L-alpha-aminoadipate from 2-oxoglutarate: step 2/5. Its function is as follows. Catalyzes the isomerization of citrate to isocitrate via cis-aconitate, a step in the citric acid cycle. Also catalyzes the reversible dehydration of (R)-homocitrate to cis-homoaconitate, a step in the alpha-aminoadipate pathway for lysine biosynthesis. This chain is Aconitate hydratase, mitochondrial (acoA), found in Emericella nidulans (strain FGSC A4 / ATCC 38163 / CBS 112.46 / NRRL 194 / M139) (Aspergillus nidulans).